The following is a 473-amino-acid chain: Sulfhydrylase-like protein lolC1 (473 aa).

The residue at position 226 (lysine 226) is an N6-(pyridoxal phosphate)lysine.

It belongs to the trans-sulfuration enzymes family. The cofactor is pyridoxal 5'-phosphate.

The protein operates within alkaloid biosynthesis. Sulfhydrylase-like protein; part of the gene cluster that mediates the biosynthesis of loline alkaloids, potent insecticidal agents composed of a pyrrolizidine ring system and an uncommon ether bridge linking carbons 2 and 7. Lolines are structurally differentiated by the various modifications of the L-amino group and include norloline, loline, N-methylloline, N-acetylloline, N-acetylnorloline, and N-formylloline. The first committed step is the condensation of O-acetyl-L-homoserine (derived from L-aspartic acid) and L-proline, probably catalyzed by the gamma-type pyridoxal 5'-phosphate(PLP)-dependent enzyme lolC, to give the diamino diacid, NACPP. Ensuing cyclization, decarboxylation, and acetylation steps yield 1-exo-acetamidopyrrolizidine (AcAP). LolO is required for installation of the ether bridge upon the pathway intermediate, 1-exo-acetamidopyrrolizidine (AcAP). In sequential 2-oxoglutarate- and O(2)-consuming steps, lolO removes hydrogens from C2 and C7 of AcAP to form both carbon-oxygen bonds in N-acetylnorloline (NANL), the precursor to all other lolines. The enzymes lolD, lolE, lolF and lolT have also been proposed to be involved in the ether-bridge installation. Further processing of the exocyclic moiety of NANL by fungal N-acetamidase (LolN), methyltransferase (LolM), and cytochrome P450 (LolP) enzymes, with occasional involvement of a plant acetyltransferase, generates the other known lolines. LolN transforms NANL to norlonine which is monomethylated and dimethylated to respectively lonine and N-methyllonine (NML) by lolM. LolP catalyzes hydroxylation of the methyl group in N-methylloline (NML) and further oxygenation to N-formylloline (NFL). A plant acetyltransferase is responsible for the acetylation of loline to form N-acetylloline (NAL). LolA might interact with aspartate kinase to prevent feedback inhibition of its activity by these end products and thereby promote production of L-homoserine from L-aspartate. In Epichloe uncinata (Endophyte fungus), this protein is Sulfhydrylase-like protein lolC1.